The primary structure comprises 474 residues: Trehalose-6-phosphate synthase (474 aa).

D-glucose 6-phosphate is bound at residue R10. UDP-alpha-D-glucose is bound at residue 22–23 (GG). Residues Y77 and D131 each contribute to the D-glucose 6-phosphate site. Residues R263 and K268 each coordinate UDP-alpha-D-glucose. Position 301 (R301) interacts with D-glucose 6-phosphate. UDP-alpha-D-glucose is bound by residues F340 and 366-370 (LVAKE).

This sequence belongs to the glycosyltransferase 20 family. In terms of assembly, homotetramer.

The catalysed reaction is D-glucose 6-phosphate + UDP-alpha-D-glucose = alpha,alpha-trehalose 6-phosphate + UDP + H(+). The protein operates within glycan biosynthesis; trehalose biosynthesis. Functionally, probably involved in the osmoprotection via the biosynthesis of trehalose. Catalyzes the transfer of glucose from UDP-alpha-D-glucose (UDP-Glc) to D-glucose 6-phosphate (Glc-6-P) to form trehalose-6-phosphate. Acts with retention of the anomeric configuration of the UDP-sugar donor. The protein is Trehalose-6-phosphate synthase of Escherichia coli O1:K1 / APEC.